A 273-amino-acid polypeptide reads, in one-letter code: Gamma-glutamyl cyclotransferase aclK (273 aa).

It belongs to the class-I pyridoxal-phosphate-dependent aminotransferase family.

The enzyme catalyses an alpha-(gamma-L-glutamyl)-L-amino acid = 5-oxo-L-proline + an L-alpha-amino acid. It participates in mycotoxin biosynthesis. Functionally, gamma-glutamyl cyclotransferase; part of the gene cluster that mediates the biosynthesis of aspirochlorine (or antibiotic A30641), an unusual halogenated spiro compound with distinctive antifungal properties due to selective inhibition of protein biosynthesis, and which is also active against bacteria, viruses, and murine tumor cells. The non-ribosomal peptide synthetase (NRPS) aclP is responsible the formation of the diketopiperazine (DKP) core from the condensation of 2 phenylalanine residues. One Phe residue is tailored into chlorotyrosine by hydroxylation and chlorination, whereas the second Phe undergoes an unprecedented C-C bond cleavage to be converted into glycine. After formation of the DKP, sulfur is incorporated into the DKP by conjugation with glutathione by aclG, followed by its stepwise degradation to the thiol by aclI, aclJ and aclK, and the dithiol oxidation by aclT. In addition, oxygenases (aclB, aclC, aclL and aclO) and O-methyltransferases (aclM and aclU) act as tailoring enzymes to produce the intermediate dechloroaspirochlorine. Ultimately, chlorination of dechloroaspirochlorine by the halogenase aclH is the last step in the aspirochlorine pathway. The sequence is that of Gamma-glutamyl cyclotransferase aclK from Aspergillus oryzae (strain ATCC 42149 / RIB 40) (Yellow koji mold).